The following is a 366-amino-acid chain: Chorismate synthase (366 aa).

Residues R48 and R54 each contribute to the NADP(+) site. FMN contacts are provided by residues 125-127 (RSS), 238-239 (NA), G278, 293-297 (KPTSS), and R319.

The protein belongs to the chorismate synthase family. In terms of assembly, homotetramer. Requires FMNH2 as cofactor.

The enzyme catalyses 5-O-(1-carboxyvinyl)-3-phosphoshikimate = chorismate + phosphate. It participates in metabolic intermediate biosynthesis; chorismate biosynthesis; chorismate from D-erythrose 4-phosphate and phosphoenolpyruvate: step 7/7. Its function is as follows. Catalyzes the anti-1,4-elimination of the C-3 phosphate and the C-6 proR hydrogen from 5-enolpyruvylshikimate-3-phosphate (EPSP) to yield chorismate, which is the branch point compound that serves as the starting substrate for the three terminal pathways of aromatic amino acid biosynthesis. This reaction introduces a second double bond into the aromatic ring system. The polypeptide is Chorismate synthase (Burkholderia orbicola (strain MC0-3)).